Here is an 882-residue protein sequence, read N- to C-terminus: DNA mismatch repair protein MutS (882 aa).

The disordered stretch occupies residues 1 to 22 (MTLPSDFPLEPPATNKDPHRDY). Position 662-669 (662-669 (GPNASGKS)) interacts with ATP.

The protein belongs to the DNA mismatch repair MutS family.

Its function is as follows. This protein is involved in the repair of mismatches in DNA. It is possible that it carries out the mismatch recognition step. This protein has a weak ATPase activity. This is DNA mismatch repair protein MutS from Microcystis aeruginosa (strain NIES-843 / IAM M-2473).